The primary structure comprises 514 residues: MTPMYPELLTDLVTDLPHAVRLQRLVSGLRTHFRCGAVALLRLEEEHLRPVAVDGLVRDTLGRRFAVSLHPRLAAILARRDVTCFHHDSMLPDPYDGLIDEHVGEPLPVHDCMGTSLHLDGRPWGVLTLDALTVGTFDAAAQAELQRLTVIVEAAIRTTRLEAEIRALQLARGKQPDGEGPADDGEIIGQSQAIAGLLHELEVVADTDLPVLLLGETGVGKELFAHRLHRHSRRRGHPLVHVNCAALPESLAESELFGHARGAFSGATGERPGRFEAAAGGTLFLDEVGELPLSIQAKLLRTLQNGEIQRLGSDRPRRVNVRVIAATNRNLREHVRDGSFRADLFHRLSVYPIPIPPLRERGNDVLLLAGRFLELNRARLGMRSLRLSAAAQDALRRYRWPGNVRELEHVISRAALRCVSRGADRNDIVTLEAELLDLDGLELPAGSAHHAAEAAIAHPALPTGATLREAVEQTQRACIEQALRAHDGSWAKAARQLGMDASNLHKLAKRLGSK.

Position 54 is a 4-aspartylphosphate (D54). Residues 187-416 (IIGQSQAIAG…LEHVISRAAL (230 aa)) enclose the Sigma-54 factor interaction domain. Residues 215-222 (GETGVGKE) and 287-296 (EVGELPLSIQ) contribute to the ATP site. The H-T-H motif DNA-binding region spans 490-509 (WAKAARQLGMDASNLHKLAK).

It participates in nitrogen metabolism; nitrate reduction (denitrification) [regulation]. In terms of biological role, required for the nitric oxide (NO) induced expression of NO reductase. Not required for expression of 2 other pathway members, nitrate reductase (nirS) and nitrous oxide reductase (nosZ). This Cupriavidus necator (strain ATCC 17699 / DSM 428 / KCTC 22496 / NCIMB 10442 / H16 / Stanier 337) (Ralstonia eutropha) protein is Nitric oxide reductase transcription regulator NorR1 (norR1).